The following is a 221-amino-acid chain: NEP1-interacting protein-like 1 (221 aa).

A run of 3 helical transmembrane segments spans residues 35-55 (LFTF…GALI), 69-89 (VGAI…LLLW), and 95-115 (GIGC…GRLV). The RING-type; atypical zinc-finger motif lies at 176-218 (CSVCLQDFQVGETVRSLPHCHHMFHLPCIDKWLRRHASCPLCR).

The protein belongs to the RING-type zinc finger family. NIP subfamily.

It is found in the membrane. May be involved in the early steps of the plant defense signaling pathway. In Arabidopsis thaliana (Mouse-ear cress), this protein is NEP1-interacting protein-like 1 (ATL27).